A 1474-amino-acid chain; its full sequence is SH3 and multiple ankyrin repeat domains protein 2 (1474 aa).

Over residues 66-76 (LSPQLLQQTPS) the composition is skewed to polar residues. The interval 66–125 (LSPQLLQQTPSKPDGATKSLGSYAPGPRSRSPSLNRLGGAGEDGKRPQPPHWHVGSPFTP) is disordered. One can recognise an SH3 domain in the interval 148-207 (VPGRLFVAIKPYQPQVDGEIPLHRGDRVKVLSIGEGGFWEGSARGHIGWFPAECVEEVQC). Position 162 is a phosphoserine (Gln162). Residues 248–342 (TVVLQKKDNE…HLVLKVVTVT (95 aa)) enclose the PDZ domain. Ser373 carries the phosphoserine modification. The segment at 392–413 (RKKKDKPEEIVPASKPSRTAEN) is disordered. At Ser457 the chain carries Phosphoserine. The residue at position 486 (Thr486) is a Phosphothreonine. A disordered region spans residues 504–534 (LSMPDTSEDIPPPPQSVPPSPPPPSPTTYNC). Residues 513–529 (IPPPPQSVPPSPPPPSP) are compositionally biased toward pro residues. Position 586 is a phosphoserine (Ser586). Disordered stretches follow at residues 659 to 920 (TIIV…ADDK), 947 to 995 (PVAG…PAAA), and 1057 to 1153 (PALA…ESMD). Low complexity predominate over residues 666–678 (STSSSGKSSQGSS). Positions 711–722 (VRDREKRLEARR) are enriched in basic and acidic residues. Residue Ser724 is modified to Phosphoserine. Over residues 783–795 (LGGGEAGAQGEAG) the composition is skewed to gly residues. Low complexity-rich tracts occupy residues 811-823 (PAAA…PASP) and 833-846 (RLLD…LALS). Basic and acidic residues-rich tracts occupy residues 847 to 868 (ARDR…KADL) and 899 to 920 (RRQE…ADDK). Thr903 is subject to Phosphothreonine. Polar residues predominate over residues 1075–1085 (SLNSSQPANST). Over residues 1119–1130 (VDSRSSSDHHLE) the composition is skewed to basic and acidic residues. The segment covering 1131–1151 (TTSTISTVSSISTLSSEGGES) has biased composition (low complexity). The SH3-binding motif lies at 1169–1175 (PPVPPKP). Disordered stretches follow at residues 1195–1216 (EDTD…SAQA) and 1260–1401 (NRGK…ISNK). Residues 1202–1212 (IPPPAPPPPPG) show a composition bias toward pro residues. The segment covering 1291-1305 (STVSGTRSTTVTFTV) has biased composition (low complexity). A glycan (O-linked (GlcNAc) threonine) is linked at Thr1292. Residues 1307–1317 (PGTSQPITLQS) show a composition bias toward polar residues. Residues Ser1334 and Ser1338 each carry the phosphoserine modification. Composition is skewed to low complexity over residues 1352-1363 (SAAAASPSPTLS) and 1385-1399 (RSRS…QPIS). The SAM domain maps to 1411–1474 (WTKPDVADWL…ERALKQLLDR (64 aa)).

It belongs to the SHANK family. In terms of assembly, is part of a complex with DLG4/PSD-95 and DLGAP1/GKAP. Interacts with CTTN/cortactin SH3 domain, DLGAP1/GKAP and alpha-latrotoxin receptor 1. Interacts with DNM2, DBNL, GRID2, BAIAP2, SLC9A3, PLCB3 and CFTR. Interacts with ABI1 (via SH3 domain). Interacts (via proline-rich region) with PDE4D isoform 5 (via N-terminal region). Interacts with PDE4D isoform 33, isoform 4, isoform 7, isoform 8 and isoform 9 but not isoform 32 and isoform 6. Interacts weakly with PDE4D isoform 31. Interacts with ABI1. Expressed in epithelial cells (at protein level). All isoforms except isoform 7 are expressed predominantly in brain, with highest levels in olfactory bulb, cerebral cortex, cerebellum, central gray matter and hippocampus. Moderate levels of expression are seen in the caudate putamen, thalamic nuclei and brain stem. In cerebellum primarily expressed in Purkinje cells. Isoform 7 is not expressed in brain but expressed in liver, cholangiocytes and thymus. Isoform 7 is present in pancreas, colonic mucosa and thymocytes (at protein level).

The protein localises to the apical cell membrane. It is found in the cytoplasm. It localises to the synapse. The protein resides in the postsynaptic density. Its subcellular location is the cell projection. The protein localises to the growth cone. It is found in the dendritic spine. In terms of biological role, seems to be an adapter protein in the postsynaptic density (PSD) of excitatory synapses that interconnects receptors of the postsynaptic membrane including NMDA-type and metabotropic glutamate receptors, and the actin-based cytoskeleton. May play a role in the structural and functional organization of the dendritic spine and synaptic junction. This chain is SH3 and multiple ankyrin repeat domains protein 2 (Shank2), found in Rattus norvegicus (Rat).